The following is a 177-amino-acid chain: 2-C-methyl-D-erythritol 2,4-cyclodiphosphate synthase (177 aa).

Positions 8 and 10 each coordinate a divalent metal cation. Residues 8 to 10 and 34 to 35 contribute to the 4-CDP-2-C-methyl-D-erythritol 2-phosphate site; these read DVH and HS. A divalent metal cation is bound at residue H42. 4-CDP-2-C-methyl-D-erythritol 2-phosphate-binding positions include 56–58, 61–65, 132–135, F139, and R142; these read DIG, FPDTD, and TTEE.

This sequence belongs to the IspF family. Homotrimer. A divalent metal cation serves as cofactor.

The catalysed reaction is 4-CDP-2-C-methyl-D-erythritol 2-phosphate = 2-C-methyl-D-erythritol 2,4-cyclic diphosphate + CMP. It participates in isoprenoid biosynthesis; isopentenyl diphosphate biosynthesis via DXP pathway; isopentenyl diphosphate from 1-deoxy-D-xylulose 5-phosphate: step 4/6. Its function is as follows. Involved in the biosynthesis of isopentenyl diphosphate (IPP) and dimethylallyl diphosphate (DMAPP), two major building blocks of isoprenoid compounds. Catalyzes the conversion of 4-diphosphocytidyl-2-C-methyl-D-erythritol 2-phosphate (CDP-ME2P) to 2-C-methyl-D-erythritol 2,4-cyclodiphosphate (ME-CPP) with a corresponding release of cytidine 5-monophosphate (CMP). This Agathobacter rectalis (strain ATCC 33656 / DSM 3377 / JCM 17463 / KCTC 5835 / VPI 0990) (Eubacterium rectale) protein is 2-C-methyl-D-erythritol 2,4-cyclodiphosphate synthase.